The chain runs to 353 residues: UPF0658 Golgi apparatus membrane protein C23H3.04 (353 aa).

A run of 8 helical transmembrane segments spans residues 39-59, 76-96, 103-123, 172-192, 226-246, 249-269, 281-301, and 318-338; these read IFFL…EGYC, SLPI…YLCV, NIIE…YSIV, PFLI…GFLA, LLKI…MVLP, AVVE…ILTL, LMMT…FKII, and MITT…AIGF.

This sequence belongs to the UPF0658 family.

The protein localises to the golgi apparatus membrane. This is UPF0658 Golgi apparatus membrane protein C23H3.04 from Schizosaccharomyces pombe (strain 972 / ATCC 24843) (Fission yeast).